Consider the following 200-residue polypeptide: Dual-action ribosomal maturation protein DarP (200 aa).

2 disordered regions span residues 1–25 and 177–200; these read MTRKTRIQPIEHAAEVDDNGYDRPS and TASGTPGGDDEAADEAGDDHDDEA. Basic and acidic residues predominate over residues 12–25; the sequence is HAAEVDDNGYDRPS. Positions 184–200 are enriched in acidic residues; it reads GDDEAADEAGDDHDDEA.

It belongs to the DarP family.

The protein resides in the cytoplasm. Its function is as follows. Member of a network of 50S ribosomal subunit biogenesis factors which assembles along the 30S-50S interface, preventing incorrect 23S rRNA structures from forming. Promotes peptidyl transferase center (PTC) maturation. The sequence is that of Dual-action ribosomal maturation protein DarP from Burkholderia ambifaria (strain MC40-6).